A 339-amino-acid polypeptide reads, in one-letter code: Anthranilate phosphoribosyltransferase (339 aa).

5-phospho-alpha-D-ribose 1-diphosphate contacts are provided by residues glycine 79, 82–83, threonine 87, 89–92, 107–115, and serine 119; these read GD, NIST, and KHGNRAVSS. An anthranilate-binding site is contributed by glycine 79. A Mg(2+)-binding site is contributed by serine 91. Asparagine 110 is a binding site for anthranilate. An anthranilate-binding site is contributed by arginine 165. The Mg(2+) site is built by aspartate 224 and glutamate 225.

This sequence belongs to the anthranilate phosphoribosyltransferase family. Homodimer. It depends on Mg(2+) as a cofactor.

The enzyme catalyses N-(5-phospho-beta-D-ribosyl)anthranilate + diphosphate = 5-phospho-alpha-D-ribose 1-diphosphate + anthranilate. It participates in amino-acid biosynthesis; L-tryptophan biosynthesis; L-tryptophan from chorismate: step 2/5. Functionally, catalyzes the transfer of the phosphoribosyl group of 5-phosphorylribose-1-pyrophosphate (PRPP) to anthranilate to yield N-(5'-phosphoribosyl)-anthranilate (PRA). This Geobacillus sp. (strain WCH70) protein is Anthranilate phosphoribosyltransferase.